We begin with the raw amino-acid sequence, 390 residues long: Chorismate synthase 2 (390 aa).

Residues Arg39 and Arg45 each coordinate NADP(+). FMN is bound by residues 132 to 134 (RSS), 253 to 254 (NA), Gly298, 313 to 317 (KPIPT), and Arg339.

This sequence belongs to the chorismate synthase family. Homotetramer. FMNH2 is required as a cofactor.

It carries out the reaction 5-O-(1-carboxyvinyl)-3-phosphoshikimate = chorismate + phosphate. The protein operates within metabolic intermediate biosynthesis; chorismate biosynthesis; chorismate from D-erythrose 4-phosphate and phosphoenolpyruvate: step 7/7. Catalyzes the anti-1,4-elimination of the C-3 phosphate and the C-6 proR hydrogen from 5-enolpyruvylshikimate-3-phosphate (EPSP) to yield chorismate, which is the branch point compound that serves as the starting substrate for the three terminal pathways of aromatic amino acid biosynthesis. This reaction introduces a second double bond into the aromatic ring system. This Bacillus cereus (strain ZK / E33L) protein is Chorismate synthase 2.